Here is a 376-residue protein sequence, read N- to C-terminus: Protein RecA (376 aa).

78 to 85 (GPESSGKT) serves as a coordination point for ATP. Residues 355 to 376 (PVELVPNVDFDDEADTEADAED) are disordered. Over residues 363-376 (DFDDEADTEADAED) the composition is skewed to acidic residues.

This sequence belongs to the RecA family.

It localises to the cytoplasm. Can catalyze the hydrolysis of ATP in the presence of single-stranded DNA, the ATP-dependent uptake of single-stranded DNA by duplex DNA, and the ATP-dependent hybridization of homologous single-stranded DNAs. It interacts with LexA causing its activation and leading to its autocatalytic cleavage. This chain is Protein RecA, found in Corynebacterium glutamicum (strain R).